The sequence spans 236 residues: Leucyl/phenylalanyl-tRNA--protein transferase (236 aa).

Belongs to the L/F-transferase family.

It is found in the cytoplasm. It catalyses the reaction N-terminal L-lysyl-[protein] + L-leucyl-tRNA(Leu) = N-terminal L-leucyl-L-lysyl-[protein] + tRNA(Leu) + H(+). The enzyme catalyses N-terminal L-arginyl-[protein] + L-leucyl-tRNA(Leu) = N-terminal L-leucyl-L-arginyl-[protein] + tRNA(Leu) + H(+). The catalysed reaction is L-phenylalanyl-tRNA(Phe) + an N-terminal L-alpha-aminoacyl-[protein] = an N-terminal L-phenylalanyl-L-alpha-aminoacyl-[protein] + tRNA(Phe). Functionally, functions in the N-end rule pathway of protein degradation where it conjugates Leu, Phe and, less efficiently, Met from aminoacyl-tRNAs to the N-termini of proteins containing an N-terminal arginine or lysine. In Vibrio campbellii (strain ATCC BAA-1116), this protein is Leucyl/phenylalanyl-tRNA--protein transferase.